The sequence spans 1142 residues: Desmoglein-2.1 (1142 aa).

The signal sequence occupies residues 1-18 (MARRISPVVAFLLCFGLS). Positions 19–38 (HFFEAEARLQHSVALHRQKR) are excised as a propeptide. At 39-643 (EWIVPPQILE…AKKGSRLGPA (605 aa)) the chain is on the extracellular side. Cadherin domains follow at residues 64-148 (SDKE…APVF), 156-258 (VDEL…VPTL), 259-416 (GGPY…GPKF), and 417-527 (FPGT…CPTL). An N-linked (GlcNAc...) asparagine glycan is attached at Asn115. The disordered stretch occupies residues 369 to 389 (SGAAGGAGAMGGASGSGGGTG). 2 N-linked (GlcNAc...) asparagine glycosylation sites follow: Asn490 and Asn576. A helical transmembrane segment spans residues 644–664 (GIGLLLLALLALLLIPLLLLL). At 665-1142 (CTCGMTGAFT…RKVVTTQSVK (478 aa)) the chain is on the cytoplasmic side. Desmoglein repeat repeat units lie at residues 948 to 974 (VEQQ…NSGP), 975 to 998 (VAEG…ERMV), 999 to 1039 (LVFR…VLQG), and 1040 to 1071 (TIQR…NGIS).

It localises to the cell junction. Its subcellular location is the desmosome. It is found in the cell membrane. The protein localises to the cytoplasm. A component of desmosome cell-cell junctions which are required for positive regulation of cellular adhesion. Involved in the interaction of plaque proteins and intermediate filaments mediating cell-cell adhesion. Required for embryogenesis, specifically for progression of epiboly and normal convergence-extension movements during gastrulation. The sequence is that of Desmoglein-2.1 from Danio rerio (Zebrafish).